Reading from the N-terminus, the 199-residue chain is FMN-dependent NADH:quinone oxidoreductase 4 (199 aa).

FMN contacts are provided by residues Ser-10, 95 to 98 (MYNL), and 139 to 142 (SRGG).

Belongs to the azoreductase type 1 family. Homodimer. Requires FMN as cofactor.

The catalysed reaction is 2 a quinone + NADH + H(+) = 2 a 1,4-benzosemiquinone + NAD(+). It catalyses the reaction N,N-dimethyl-1,4-phenylenediamine + anthranilate + 2 NAD(+) = 2-(4-dimethylaminophenyl)diazenylbenzoate + 2 NADH + 2 H(+). Functionally, quinone reductase that provides resistance to thiol-specific stress caused by electrophilic quinones. Its function is as follows. Also exhibits azoreductase activity. Catalyzes the reductive cleavage of the azo bond in aromatic azo compounds to the corresponding amines. The protein is FMN-dependent NADH:quinone oxidoreductase 4 of Burkholderia lata (strain ATCC 17760 / DSM 23089 / LMG 22485 / NCIMB 9086 / R18194 / 383).